The primary structure comprises 151 residues: Large ribosomal subunit protein bL9 (151 aa).

Belongs to the bacterial ribosomal protein bL9 family.

In terms of biological role, binds to the 23S rRNA. The chain is Large ribosomal subunit protein bL9 from Bordetella petrii (strain ATCC BAA-461 / DSM 12804 / CCUG 43448).